A 391-amino-acid polypeptide reads, in one-letter code: Pyridinium-3,5-bisthiocarboxylic acid mononucleotide nickel insertion protein (391 aa).

Belongs to the LarC family.

It carries out the reaction Ni(II)-pyridinium-3,5-bisthiocarboxylate mononucleotide = pyridinium-3,5-bisthiocarboxylate mononucleotide + Ni(2+). Involved in the biosynthesis of a nickel-pincer cofactor ((SCS)Ni(II) pincer complex). Binds Ni(2+), and functions in nickel delivery to pyridinium-3,5-bisthiocarboxylic acid mononucleotide (P2TMN), to form the mature cofactor. Is thus probably required for the activation of nickel-pincer cofactor-dependent enzymes. The polypeptide is Pyridinium-3,5-bisthiocarboxylic acid mononucleotide nickel insertion protein (Staphylococcus saprophyticus subsp. saprophyticus (strain ATCC 15305 / DSM 20229 / NCIMB 8711 / NCTC 7292 / S-41)).